The sequence spans 52 residues: Light-harvesting protein B-870 alpha chain (52 aa).

The Cytoplasmic portion of the chain corresponds to 1–15 (MAKFYKIWLIFDPRR). A helical transmembrane segment spans residues 16–36 (VFVAQGVFLFLLAAMIHLVVL). Position 32 (His32) interacts with a bacteriochlorophyll. The Periplasmic segment spans residues 37–52 (SSGLNWFEAAAAVGGQ).

It belongs to the antenna complex alpha subunit family. The core complex is formed by different alpha and beta chains, binding bacteriochlorophyll molecules, and arranged most probably in tetrameric structures disposed around the reaction center. The non-pigmented gamma chains may constitute additional components.

It is found in the cell inner membrane. Antenna complexes are light-harvesting systems, which transfer the excitation energy to the reaction centers. This Roseobacter denitrificans (strain ATCC 33942 / OCh 114) (Erythrobacter sp. (strain OCh 114)) protein is Light-harvesting protein B-870 alpha chain (pufA).